Reading from the N-terminus, the 387-residue chain is Patatin-03 (387 aa).

Residues 1-23 form the signal peptide; it reads MATTKSVLVLIFMILATTSSTFA. The region spanning 32–230 is the PNPLA domain; the sequence is LSIDGGGIKG…TVADPALLSV (199 aa). The GXGXXG motif lies at 36 to 41; it reads GGGIKG. Positions 75 to 79 match the GXSXG motif; it reads GTSTG. Serine 77 serves as the catalytic Nucleophile. N-linked (GlcNAc...) asparagine glycans are attached at residues asparagine 115 and asparagine 203. The active-site Proton acceptor is the aspartate 216. The DGA/G motif lies at 216 to 218; it reads DGA.

It belongs to the patatin family. As to expression, tuber.

The protein resides in the vacuole. Probable lipolytic acyl hydrolase (LAH), an activity which is thought to be involved in the response of tubers to pathogens. This Solanum tuberosum (Potato) protein is Patatin-03.